Consider the following 461-residue polypeptide: Thyroid hormone receptor beta (461 aa).

The interval 1-24 is disordered; that stretch reads MTPNSMTENRLPAWDKQKPHPDRG. The segment at 1–106 is modulating; the sequence is MTPNSMTENR…IPSYLDKDEL (106 aa). Residues 13-24 show a composition bias toward basic and acidic residues; sequence AWDKQKPHPDRG. Cys107, Cys110, Cys124, Cys127, Cys145, Cys151, Cys161, and Cys164 together coordinate Zn(2+). NR C4-type zinc fingers lie at residues 107–127 and 145–169; these read CVVCGDKATGYHYRCITCEGC and CKYEGKCIIDKVTRNQCQECRFKKC. The segment at residues 107–181 is a DNA-binding region (nuclear receptor); that stretch reads CVVCGDKATG…VGMATDLVLD (75 aa). An NR LBD domain is found at 217-461; sequence EEWELIKTVT…PPLFLEVFED (245 aa). The segment at 244 to 461 is interaction with NR2F6; it reads KFLPEDIGQA…PPLFLEVFED (218 aa). Residues Arg282, Asn331, and His435 each coordinate 3,3',5-triiodo-L-thyronine. Residues Arg282, Asn331, and His435 each contribute to the L-thyroxine site.

It belongs to the nuclear hormone receptor family. NR1 subfamily. As to quaternary structure, binds DNA as a dimer; homodimer and heterodimer with RXRA. Interacts with the coactivators NCOA1/SRC1, NCOA2/GRIP1, NCOA7 and MED1/TRAP220 in a ligand-inducible manner. Interacts with the corepressor NCOR1 in absence of ligand. Interacts with C1D. Interacts with NR2F6; the interaction impairs the binding of the THRB homodimer and THRB:RXRB heterodimer to T3 response elements. Interacts with PRMT2 and THRSP. Interacts with TACC1; this interaction is decreased in the presence of thyroid hormone T3.

The protein localises to the nucleus. In terms of biological role, nuclear hormone receptor that can act as a repressor or activator of transcription. High affinity receptor for thyroid hormones, including triiodothyronine and thyroxine. This chain is Thyroid hormone receptor beta (Thrb), found in Rattus norvegicus (Rat).